Consider the following 200-residue polypeptide: Methylamine utilization protein MauD (200 aa).

The helical transmembrane segment at 4-24 threads the bilayer; sequence FLIASNILLWLAFLGVTVVML. A Thioredoxin domain is found at 49–183; it reads PDIGDAAPEF…LESLLEADRT (135 aa).

Its subcellular location is the membrane. It participates in one-carbon metabolism; methylamine degradation. May be specifically involved in the processing, transport, and/or maturation of the MADH beta-subunit. The sequence is that of Methylamine utilization protein MauD (mauD) from Paracoccus denitrificans.